The sequence spans 375 residues: Secreted LysM effector Vd4LysM (375 aa).

A signal peptide spans 1–24 (MPSVTISSTMLAGLLLMLVPASSA). A LysM 1 domain is found at 57 to 104 (SWWWDNEGQIPCANMPAEWGITMQDFLRWNPSITSSCGNFLNGRSYCV). The disordered stretch occupies residues 108–139 (GEEPPVPGTPTTTTAPATTTKPSNGITTPQPI). A compositionally biased stretch (low complexity) spans 116–129 (TPTTTTAPATTTKP). The 47-residue stretch at 149-195 (KFHYISEGDRCQDILSYQKITLADFFKWNPAVKSDCSGLWSKTNACV) folds into the LysM 2 domain. A compositionally biased stretch (low complexity) spans 206-217 (TTTTKPATPTTP). The disordered stretch occupies residues 206-225 (TTTTKPATPTTPSNGITTPQ). In terms of domain architecture, LysM 3 spans 237-283 (KFHYISEGDRCQDILSYQKITQADFFKWNPAVKSDCSGLWSKTHACV). Residues 287–317 (GGQAPPPTPTTTKPTTTKPPGNGVTTPTPTQ) form a disordered region. Over residues 296–317 (TTTKPTTTKPPGNGVTTPTPTQ) the composition is skewed to low complexity. The LysM 4 domain maps to 326–372 (KFHFVSPGNTCQQIVSYQKITMANFVKWNSGAGSGCNNLWGNTHACV).

It belongs to the secreted LysM effector family.

Its function is as follows. Might have a role in sequestration of chitin oligosaccharides (breakdown products of fungal cell walls that are released during invasion and act as triggers of host immunity) to dampen host defense. Does not play an important role during host colonization. This is Secreted LysM effector Vd4LysM from Verticillium dahliae (strain VdLs.17 / ATCC MYA-4575 / FGSC 10137) (Verticillium wilt).